A 276-amino-acid polypeptide reads, in one-letter code: S-adenosylmethionine-dependent nucleotide dehydratase (276 aa).

A Radical SAM core domain is found at 6-216 (TSVRKFRSAN…RRRHEDIGCI (211 aa)). 3 residues coordinate [4Fe-4S] cluster: cysteine 22, cysteine 26, and cysteine 29.

It belongs to the radical SAM superfamily. Viperin family. [4Fe-4S] cluster serves as cofactor.

The catalysed reaction is CTP + AH2 + S-adenosyl-L-methionine = 3'-deoxy-3',4'-didehydro-CTP + 5'-deoxyadenosine + L-methionine + A + H2O + H(+). Expression of pVip50 in E.coli (strain MG1655) confers resistance to phage P1; has no effect against T7. Catalyzes the conversion of cytosine triphosphate (CTP) to 3'-deoxy-3',4'-didehydro-CTP (ddhCTP), probably via a SAM-dependent radical mechanism. The modified nucleotide represses transcription from T7 RNA polymerase-directed genes (possibly by acting as chain terminators), strongly suggesting these nucleotides block viral polymerase transcription. How this protein allows bacteria to resist viruses that do not encode their own RNA polymerase (such as lambda, P1) is unknown. The sequence is that of S-adenosylmethionine-dependent nucleotide dehydratase from Thermoplasmatales archaeon (strain ISO4-H5).